The chain runs to 322 residues: tRNA U34 carboxymethyltransferase (322 aa).

Carboxy-S-adenosyl-L-methionine-binding positions include Lys-90, Trp-104, Lys-109, Gly-129, 151–153 (DPT), 179–180 (ME), Met-195, Tyr-199, and Arg-314.

This sequence belongs to the class I-like SAM-binding methyltransferase superfamily. CmoB family. As to quaternary structure, homotetramer.

The catalysed reaction is carboxy-S-adenosyl-L-methionine + 5-hydroxyuridine(34) in tRNA = 5-carboxymethoxyuridine(34) in tRNA + S-adenosyl-L-homocysteine + H(+). In terms of biological role, catalyzes carboxymethyl transfer from carboxy-S-adenosyl-L-methionine (Cx-SAM) to 5-hydroxyuridine (ho5U) to form 5-carboxymethoxyuridine (cmo5U) at position 34 in tRNAs. The polypeptide is tRNA U34 carboxymethyltransferase (Alcanivorax borkumensis (strain ATCC 700651 / DSM 11573 / NCIMB 13689 / SK2)).